The sequence spans 278 residues: Leucine-rich repeat-containing protein 10 (278 aa).

LRR repeat units lie at residues 30–51 (LDRMVDLSGSQLRRFPVHVCSF), 52–74 (QELVKLYLSDNRLNSLPPELGQL), 76–97 (NLQILALDFNNFKALPQVVCTL), 98–121 (KQLCILYLGNNKLCDLPRELSLLQ), 123–143 (LRTLWVEANYLTKLPEVVCEL), 144–166 (SLLKTLHAGSNALRLLPGQLQRL), 167–189 (RELRTIWLSGNLLTDFPPVLLHM), and 191–213 (FLEIIDVDRNSIRYFPSLAHLSS). The segment covering 239–250 (RWAEETPEPDPR) has biased composition (basic and acidic residues). Residues 239-278 (RWAEETPEPDPRKARRYALAREESQEAQLPALPPLPPTNS) are disordered. Pro residues predominate over residues 269–278 (ALPPLPPTNS).

The protein localises to the nucleus. Functionally, may play important roles in cardiac development and/or cardiac function. The chain is Leucine-rich repeat-containing protein 10 (LRRC10) from Bos taurus (Bovine).